A 215-amino-acid polypeptide reads, in one-letter code: NADH-quinone oxidoreductase subunit C (215 aa).

This sequence belongs to the complex I 30 kDa subunit family. NDH-1 is composed of 14 different subunits. Subunits NuoB, C, D, E, F, and G constitute the peripheral sector of the complex.

It is found in the cell inner membrane. It catalyses the reaction a quinone + NADH + 5 H(+)(in) = a quinol + NAD(+) + 4 H(+)(out). Functionally, NDH-1 shuttles electrons from NADH, via FMN and iron-sulfur (Fe-S) centers, to quinones in the respiratory chain. The immediate electron acceptor for the enzyme in this species is believed to be ubiquinone. Couples the redox reaction to proton translocation (for every two electrons transferred, four hydrogen ions are translocated across the cytoplasmic membrane), and thus conserves the redox energy in a proton gradient. The protein is NADH-quinone oxidoreductase subunit C of Bordetella parapertussis (strain 12822 / ATCC BAA-587 / NCTC 13253).